The chain runs to 104 residues: L-rhamnose mutarotase (104 aa).

Y18 is a binding site for substrate. The Proton donor role is filled by H22. Residues Y41 and 76 to 77 (WW) contribute to the substrate site.

The protein belongs to the rhamnose mutarotase family. Homodimer.

It is found in the cytoplasm. It carries out the reaction alpha-L-rhamnose = beta-L-rhamnose. It functions in the pathway carbohydrate metabolism; L-rhamnose metabolism. Involved in the anomeric conversion of L-rhamnose. This Tolumonas auensis (strain DSM 9187 / NBRC 110442 / TA 4) protein is L-rhamnose mutarotase.